A 158-amino-acid chain; its full sequence is Transcriptional repressor NrdR (158 aa).

A zinc finger lies at 3–34 (CPSCQNTDSRVLESRAADGGRSVRRRRECLNC). The ATP-cone domain occupies 49 to 139 (ITVIKRDGCR…VYRQFRGIDD (91 aa)).

The protein belongs to the NrdR family. The cofactor is Zn(2+).

Negatively regulates transcription of bacterial ribonucleotide reductase nrd genes and operons by binding to NrdR-boxes. In Synechococcus sp. (strain CC9902), this protein is Transcriptional repressor NrdR.